A 230-amino-acid polypeptide reads, in one-letter code: Uracil-DNA glycosylase (230 aa).

The Proton acceptor role is filled by aspartate 65.

Belongs to the uracil-DNA glycosylase (UDG) superfamily. UNG family.

The protein localises to the cytoplasm. The enzyme catalyses Hydrolyzes single-stranded DNA or mismatched double-stranded DNA and polynucleotides, releasing free uracil.. Functionally, excises uracil residues from the DNA which can arise as a result of misincorporation of dUMP residues by DNA polymerase or due to deamination of cytosine. This is Uracil-DNA glycosylase from Lactiplantibacillus plantarum (strain ATCC BAA-793 / NCIMB 8826 / WCFS1) (Lactobacillus plantarum).